The primary structure comprises 132 residues: uncharacterized protein (132 aa).

The segment at 1-34 (MTAGAGGSPPTRRCPATEDRAPATVATPSSADPT) is disordered.

This sequence to M.tuberculosis Rv2656c.

This is an uncharacterized protein from Mycobacterium tuberculosis (strain CDC 1551 / Oshkosh).